Consider the following 253-residue polypeptide: Prepilin leader peptidase/N-methyltransferase (253 aa).

Residues 4–24 (VYLILFSIVSLILGSFSNVVI) form a helical membrane-spanning segment. Zn(2+) is bound by residues Cys-48, Cys-51, Cys-73, and Cys-76. The next 6 helical transmembrane spans lie at 80–100 (ISLS…PIYW), 106–126 (VDSF…VIDF), 129–149 (MLLP…YVQQ), 159–179 (IIGG…VRLF), 198–218 (TLIG…IAFI), and 230–250 (CLYI…FFSI).

This sequence belongs to the peptidase A24 family. It depends on Zn(2+) as a cofactor.

Its subcellular location is the cell inner membrane. It catalyses the reaction Typically cleaves a -Gly-|-Phe- bond to release an N-terminal, basic peptide of 5-8 residues from type IV prepilin, and then N-methylates the new N-terminal amino group, the methyl donor being S-adenosyl-L-methionine.. In terms of biological role, plays an essential role in type IV pili and type II pseudopili formation by proteolytically removing the leader sequence from substrate proteins and subsequently monomethylating the alpha-amino group of the newly exposed N-terminal phenylalanine. In Vibrio cholerae serotype O1 (strain ATCC 39315 / El Tor Inaba N16961), this protein is Prepilin leader peptidase/N-methyltransferase (tcpJ).